The primary structure comprises 147 residues: 3-dehydroquinate dehydratase (147 aa).

Tyr-23 serves as the catalytic Proton acceptor. Asn-74, His-80, and Asp-87 together coordinate substrate. Residue His-100 is the Proton donor of the active site. Substrate is bound by residues 101–102 (LS) and Arg-111.

Belongs to the type-II 3-dehydroquinase family. Homododecamer.

The catalysed reaction is 3-dehydroquinate = 3-dehydroshikimate + H2O. It participates in metabolic intermediate biosynthesis; chorismate biosynthesis; chorismate from D-erythrose 4-phosphate and phosphoenolpyruvate: step 3/7. In terms of biological role, catalyzes a trans-dehydration via an enolate intermediate. The chain is 3-dehydroquinate dehydratase from Clostridium botulinum (strain 657 / Type Ba4).